Reading from the N-terminus, the 222-residue chain is Superoxide dismutase [Mn], mitochondrial (222 aa).

The N-terminal 24 residues, 1–24 (MLSRAVCGTGRQLAPALGYLGSRQ), are a transit peptide targeting the mitochondrion. Histidine 50 is a binding site for Mn(2+). Tyrosine 58 is subject to 3'-nitrotyrosine. N6-acetyllysine; alternate occurs at positions 68 and 75. 2 positions are modified to N6-succinyllysine; alternate: lysine 68 and lysine 75. Histidine 98 contributes to the Mn(2+) binding site. The residue at position 114 (lysine 114) is an N6-acetyllysine. 2 positions are modified to N6-acetyllysine; alternate: lysine 122 and lysine 130. 2 positions are modified to N6-succinyllysine; alternate: lysine 122 and lysine 130. Residues aspartate 183 and histidine 187 each coordinate Mn(2+). Lysine 202 is modified (N6-acetyllysine).

Belongs to the iron/manganese superoxide dismutase family. In terms of assembly, homotetramer. It depends on Mn(2+) as a cofactor. In terms of processing, nitrated under oxidative stress. Nitration coupled with oxidation inhibits the catalytic activity. Acetylation at Lys-122 decreases enzymatic activity. Deacetylated by SIRT3 upon exposure to ionizing radiations or after long fasting. Post-translationally, polyubiquitinated; leading to proteasomal degradation. Deubiquitinated by USP36 which increases protein stability.

The protein resides in the mitochondrion matrix. The enzyme catalyses 2 superoxide + 2 H(+) = H2O2 + O2. In terms of biological role, destroys superoxide anion radicals which are normally produced within the cells and which are toxic to biological systems. The protein is Superoxide dismutase [Mn], mitochondrial (SOD2) of Macaca fascicularis (Crab-eating macaque).